The primary structure comprises 347 residues: UDP-3-O-acylglucosamine N-acyltransferase (347 aa).

H248 serves as the catalytic Proton acceptor.

Belongs to the transferase hexapeptide repeat family. LpxD subfamily. As to quaternary structure, homotrimer.

It catalyses the reaction a UDP-3-O-[(3R)-3-hydroxyacyl]-alpha-D-glucosamine + a (3R)-hydroxyacyl-[ACP] = a UDP-2-N,3-O-bis[(3R)-3-hydroxyacyl]-alpha-D-glucosamine + holo-[ACP] + H(+). It participates in bacterial outer membrane biogenesis; LPS lipid A biosynthesis. In terms of biological role, catalyzes the N-acylation of UDP-3-O-acylglucosamine using 3-hydroxyacyl-ACP as the acyl donor. Is involved in the biosynthesis of lipid A, a phosphorylated glycolipid that anchors the lipopolysaccharide to the outer membrane of the cell. The sequence is that of UDP-3-O-acylglucosamine N-acyltransferase from Synechococcus sp. (strain CC9902).